Reading from the N-terminus, the 494-residue chain is MGSTSSLYAAIDLGSNSFHMLVVREVAGSIQTLTRIKRKVRLAAGLNSENALSNEAMERGWQCLRLFAERLQDIPPSQIRVVATATLRLAVNAGDFIANAQEILGCPVQVISGEEEARLIYQGVAHTTGGADQRLVVDIGGASTELVTGTGAQTTSLFSLSMGCVTWLERYFADRNLGQENFDAAEKAAREVLRPVADELRYHGWKVCVGASGTVQALQEIMMAQGMDERITLEKLQQLKQRAIHCGRLEELEIDGLTLERALVFPSGLAILIAIFTELNIQCMTLAGGALREGLVYGMLHLAVEQDIRSRTLRNIQRRFMIDIDQAQRVAKVAANFFDQVEKEWHLEAISRDLLISACQLHEIGLSVDFKQAPQHAAYLVRNLDLPGFTPAQKKLLATLLLNQTNPVDLSSLHQQNAVPPRVAEQLCRLLRLAIIFASRRRDDLVPEMTLQANHELLTLTLPQGWLTQHPLGKEIIAQESQWQSYVHWPLEVH.

Belongs to the GppA/Ppx family. GppA subfamily.

The catalysed reaction is guanosine 3'-diphosphate 5'-triphosphate + H2O = guanosine 3',5'-bis(diphosphate) + phosphate + H(+). It participates in purine metabolism; ppGpp biosynthesis; ppGpp from GTP: step 2/2. In terms of biological role, catalyzes the conversion of pppGpp to ppGpp. Guanosine pentaphosphate (pppGpp) is a cytoplasmic signaling molecule which together with ppGpp controls the 'stringent response', an adaptive process that allows bacteria to respond to amino acid starvation, resulting in the coordinated regulation of numerous cellular activities. In Shigella sonnei (strain Ss046), this protein is Guanosine-5'-triphosphate,3'-diphosphate pyrophosphatase.